The primary structure comprises 542 residues: CTP synthase (542 aa).

The segment at Met1–Met265 is amidoligase domain. Ser13 contributes to the CTP binding site. Ser13 contributes to the UTP binding site. Ser14–Ile19 is an ATP binding site. Tyr54 lines the L-glutamine pocket. Asp71 is an ATP binding site. Residues Asp71 and Glu139 each contribute to the Mg(2+) site. CTP is bound by residues Asp146–Glu148, Lys186–Gln191, and Lys222. UTP contacts are provided by residues Lys186–Gln191 and Lys222. Positions Thr291 to Leu541 constitute a Glutamine amidotransferase type-1 domain. Position 353 (Ala353) interacts with L-glutamine. The active-site Nucleophile; for glutamine hydrolysis is the Cys380. Residues Phe381–Gln384, Glu404, and Arg469 each bind L-glutamine. Catalysis depends on residues His514 and Glu516.

It belongs to the CTP synthase family. In terms of assembly, homotetramer.

The enzyme catalyses UTP + L-glutamine + ATP + H2O = CTP + L-glutamate + ADP + phosphate + 2 H(+). The catalysed reaction is L-glutamine + H2O = L-glutamate + NH4(+). It catalyses the reaction UTP + NH4(+) + ATP = CTP + ADP + phosphate + 2 H(+). It functions in the pathway pyrimidine metabolism; CTP biosynthesis via de novo pathway; CTP from UDP: step 2/2. Its activity is regulated as follows. Allosterically activated by GTP, when glutamine is the substrate; GTP has no effect on the reaction when ammonia is the substrate. The allosteric effector GTP functions by stabilizing the protein conformation that binds the tetrahedral intermediate(s) formed during glutamine hydrolysis. Inhibited by the product CTP, via allosteric rather than competitive inhibition. Its function is as follows. Catalyzes the ATP-dependent amination of UTP to CTP with either L-glutamine or ammonia as the source of nitrogen. Regulates intracellular CTP levels through interactions with the four ribonucleotide triphosphates. The chain is CTP synthase from Bartonella henselae (strain ATCC 49882 / DSM 28221 / CCUG 30454 / Houston 1) (Rochalimaea henselae).